We begin with the raw amino-acid sequence, 203 residues long: E3 ubiquitin-protein ligase RNF152 (203 aa).

The segment at 12 to 55 adopts an RING-type zinc-finger fold; that stretch reads CQICFNYYSPRRRPKLLDCKHTCCSVCLQQMRTSQKDVRCPWCR. Residues 106 to 165 form a necessary for interaction with RRAGA region; sequence ISKERALLPGDMGCRLLPGSQQKSVTVVTVPAEQRPLQGGAPQEAVEEEPDRRGVAKSST. The helical transmembrane segment at 167-187 threads the bilayer; sequence SGVCTVILVACVLVFLLGIVL.

Belongs to the RNF152 family. In terms of assembly, interacts with RRAGA (inactive GDP-bound form); stimulated by amino acid starvation. Post-translationally, ubiquitinated. Autoubiquitinated in vitro, leading to its degradation by the proteasome.

It localises to the lysosome membrane. The enzyme catalyses S-ubiquitinyl-[E2 ubiquitin-conjugating enzyme]-L-cysteine + [acceptor protein]-L-lysine = [E2 ubiquitin-conjugating enzyme]-L-cysteine + N(6)-ubiquitinyl-[acceptor protein]-L-lysine.. It participates in protein modification; protein ubiquitination. E3 ubiquitin-protein ligase that acts as a negative regulator of mTORC1 signaling by mediating ubiquitination of RagA/RRAGA and RHEB. Catalyzes 'Lys-63'-linked polyubiquitination of RagA/RRAGA in response to amino acid starvation, thereby regulating mTORC1 signaling. Also mediates monoubiquitination of RHEB, promoting its association with the TSC-TBC complex and subsequent inhibition. Also mediates 'Lys-48'-linked polyubiquitination of target proteins and their subsequent targeting to the proteasome for degradation. Induces apoptosis when overexpressed. The polypeptide is E3 ubiquitin-protein ligase RNF152 (Ailuropoda melanoleuca (Giant panda)).